The sequence spans 256 residues: DNA repair protein RecO (256 aa).

The protein belongs to the RecO family.

Its function is as follows. Involved in DNA repair and RecF pathway recombination. The sequence is that of DNA repair protein RecO from Clostridium novyi (strain NT).